The following is a 488-amino-acid chain: DNA polymerase processivity factor (488 aa).

3 disordered regions span residues 1–26 (MTDS…GQPE), 331–453 (SPSA…RSGS), and 469–488 (PGAF…FGFP). The span at 331–344 (SPSAGSSASRASGS) shows a compositional bias: low complexity. The segment covering 345–355 (EPTDSQDSASD) has biased composition (polar residues). The span at 368 to 379 (AARAGEAGALHA) shows a compositional bias: low complexity. Residues 383-393 (PSSTTRVTPTT) show a composition bias toward polar residues. Residues 394–413 (KRGRSGGEDARADTALKKPK) carry the Bipartite nuclear localization signal motif. Over residues 398–409 (SGGEDARADTAL) the composition is skewed to basic and acidic residues. The span at 437 to 453 (ADGTAARPAAPDARSGS) shows a compositional bias: low complexity.

The protein belongs to the herpesviridae DNA polymerase processivity factor family. Interacts with the DNA polymerase catalytic subunit UL30. Interacts with the origin-binding protein.

It is found in the host nucleus. In terms of biological role, plays an essential role in viral DNA replication by acting as the polymerase accessory subunit. Associates with the viral polymerase to increase its processivity and forms high-affinity direct interactions with DNA. Facilitates the origin-binding protein UL9 loading onto DNA thus increasing its ability to assemble into a functional complex capable of unwinding duplex DNA. The polypeptide is DNA polymerase processivity factor (Homo sapiens (Human)).